The sequence spans 78 residues: Translation initiation factor IF-1, plastid (78 aa).

Residues 1–72 (MKKQDLIDME…TKGRITYRLR (72 aa)) form the S1-like domain.

The protein belongs to the IF-1 family. Component of the 30S ribosomal translation pre-initiation complex which assembles on the 30S ribosome in the order IF-2 and IF-3, IF-1 and N-formylmethionyl-tRNA(fMet); mRNA recruitment can occur at any time during PIC assembly.

It is found in the plastid. In terms of biological role, one of the essential components for the initiation of protein synthesis. Stabilizes the binding of IF-2 and IF-3 on the 30S subunit to which N-formylmethionyl-tRNA(fMet) subsequently binds. Helps modulate mRNA selection, yielding the 30S pre-initiation complex (PIC). Upon addition of the 50S ribosomal subunit IF-1, IF-2 and IF-3 are released leaving the mature 70S translation initiation complex. The polypeptide is Translation initiation factor IF-1, plastid (Aneura mirabilis (Parasitic liverwort)).